Consider the following 372-residue polypeptide: Chorismate synthase (372 aa).

R48 serves as a coordination point for NADP(+). Residues 125 to 127 (RSS), G285, 300 to 304 (KPTPS), and R327 contribute to the FMN site.

This sequence belongs to the chorismate synthase family. The cofactor is FMNH2.

The catalysed reaction is 5-O-(1-carboxyvinyl)-3-phosphoshikimate = chorismate + phosphate. It functions in the pathway metabolic intermediate biosynthesis; chorismate biosynthesis; chorismate from D-erythrose 4-phosphate and phosphoenolpyruvate: step 7/7. Catalyzes the anti-1,4-elimination of the C-3 phosphate and the C-6 proR hydrogen from 5-enolpyruvylshikimate-3-phosphate (EPSP) to yield chorismate, which is the branch point compound that serves as the starting substrate for the three terminal pathways of aromatic amino acid biosynthesis. This reaction introduces a second double bond into the aromatic ring system. This Methanocella arvoryzae (strain DSM 22066 / NBRC 105507 / MRE50) protein is Chorismate synthase.